The following is a 236-amino-acid chain: CO-responsive transcriptional regulator RcoM (236 aa).

Residues M1–L64 form the PAS domain. Heme is bound at residue H52. The HTH LytTR-type domain occupies V131–I236.

The cofactor is heme.

Activates the expression of the CowN protein in response to carbon monoxide (CO). Is required to sustain N(2)-dependent growth in the presence of low levels of carbon monoxide (CO). The sequence is that of CO-responsive transcriptional regulator RcoM (rcoM) from Rhodospirillum rubrum (strain ATCC 11170 / ATH 1.1.1 / DSM 467 / LMG 4362 / NCIMB 8255 / S1).